The sequence spans 194 residues: Endo-1,4-beta-xylanase (194 aa).

Gly-1 is subject to N-acetylglycine. Residues 1–191 (GTTPNSEGWH…SSGYARITVA (191 aa)) enclose the GH11 domain. Glu-86 serves as the catalytic Nucleophile. Cysteines 110 and 154 form a disulfide. Residue Glu-178 is the Proton donor of the active site.

It belongs to the glycosyl hydrolase 11 (cellulase G) family.

It carries out the reaction Endohydrolysis of (1-&gt;4)-beta-D-xylosidic linkages in xylans.. Its pathway is glycan degradation; xylan degradation. The polypeptide is Endo-1,4-beta-xylanase (Byssochlamys spectabilis (Paecilomyces variotii)).